Here is a 521-residue protein sequence, read N- to C-terminus: Two-component response regulator ARR11 (521 aa).

The Response regulatory domain occupies 12-127; that stretch reads RVLVVDDDPT…ELKIIWQHVL (116 aa). At aspartate 63 the chain carries 4-aspartylphosphate. Positions 192-195 match the Nuclear localization signal motif; it reads KKAR. A DNA-binding region (myb-like GARP) is located at residues 195-246; sequence RVVWSFELHHKFVNAVNQIGCDHKAGPKKILDLMNVPWLTRENVASHLQKYR.

The protein belongs to the ARR family. Type-B subfamily. As to quaternary structure, binds the target DNA as a monomer. Post-translationally, two-component system major event consists of a His-to-Asp phosphorelay between a sensor histidine kinase (HK) and a response regulator (RR). In plants, the His-to-Asp phosphorelay involves an additional intermediate named Histidine-containing phosphotransfer protein (HPt). This multistep phosphorelay consists of a His-Asp-His-Asp sequential transfer of a phosphate group between first a His and an Asp of the HK protein, followed by the transfer to a conserved His of the HPt protein and finally the transfer to an Asp in the receiver domain of the RR protein. In terms of tissue distribution, detected in the whole plant. Predominantly expressed in roots and stems.

It localises to the nucleus. Functionally, transcriptional activator that binds specifically to the DNA sequence 5'-[AG]GATT-3'. Functions as a response regulator involved in His-to-Asp phosphorelay signal transduction system. Phosphorylation of the Asp residue in the receiver domain activates the ability of the protein to promote the transcription of target genes. Could directly activate some type-A response regulators in response to cytokinins. The sequence is that of Two-component response regulator ARR11 (ARR11) from Arabidopsis thaliana (Mouse-ear cress).